Consider the following 312-residue polypeptide: Short chain dehydrogenase pgmD (312 aa).

The NADP(+) site is built by Val-46, Ile-47, Lys-171, Tyr-207, Lys-211, and Thr-242. Tyr-207 acts as the Proton donor in catalysis. The active-site Lowers pKa of active site Tyr is Lys-211.

It belongs to the short-chain dehydrogenases/reductases (SDR) family.

It participates in pigment biosynthesis. The protein operates within secondary metabolite biosynthesis. Functionally, short chain dehydrogenase; part of the gene cluster that mediates the biosynthesis of pleosporalin A, ascomycone A, as well as a third cryptic naphthoquinone derived pigment, all responsible for the coloration of conidia. Essential for the production of pleosporalin A, but not the 2 other final products. The pathway begins with the biosynthesis of the cyclized heptaketide 3-acetonyl-1,6,8-trihydroxy-2-naphthaldehyde by the NR-PKS pgmA. The C-6 hydroxyl group is further methylated by the O-methyltransferase pgmB to yield fusarubinaldehyde which is in turn oxidized by the cytochrome P450 monooxygenase pgmC at C-9. The C-1 hydroxyl group is then methylated spontaneously. Although pgmE, pgmD and pgmH are essential for the production of pleosporalin A, it is not the case for the 2 other final products and it remains difficult to assign a specific function to each enzyme. PgmF and pgmG seem not to be involved in pigment biosynthesis although they were regulated by the cluster-specific transcription factor pgmR. This Aspergillus terreus protein is Short chain dehydrogenase pgmD.